The following is a 157-amino-acid chain: Ribosomal RNA large subunit methyltransferase H (157 aa).

Residues Leu-74, Gly-106, and 125–130 each bind S-adenosyl-L-methionine; that span reads LSDMTL.

The protein belongs to the RNA methyltransferase RlmH family. As to quaternary structure, homodimer.

The protein localises to the cytoplasm. It catalyses the reaction pseudouridine(1915) in 23S rRNA + S-adenosyl-L-methionine = N(3)-methylpseudouridine(1915) in 23S rRNA + S-adenosyl-L-homocysteine + H(+). Functionally, specifically methylates the pseudouridine at position 1915 (m3Psi1915) in 23S rRNA. This chain is Ribosomal RNA large subunit methyltransferase H, found in Desulfovibrio desulfuricans (strain ATCC 27774 / DSM 6949 / MB).